The following is a 1243-amino-acid chain: Plasma membrane calcium-transporting ATPase 2 (1243 aa).

Polar residues predominate over residues 1–13 (MGDMTNSDFYSKN). The disordered stretch occupies residues 1 to 24 (MGDMTNSDFYSKNQRNESSHGGEF). Residues 1–94 (MGDMTNSDFY…NFIPPKKPKT (94 aa)) lie on the Cytoplasmic side of the membrane. 2 positions are modified to phosphoserine: Ser18 and Ser27. A helical transmembrane segment spans residues 95 to 115 (FLQLVWEALQDVTLIILEIAA). Over 116–152 (IISLGLSFYHPPGESNEGCATAQGGAEDEGEAEAGWI) the chain is Extracellular. A helical membrane pass occupies residues 153–173 (EGAAILLSVICVVLVTAFNDW). Residues 174–390 (SKEKQFRGLQ…KEKSVLQGKL (217 aa)) are Cytoplasmic-facing. A compositionally biased stretch (basic and acidic residues) spans 296 to 308 (EEKKDKKGVKKGD). Positions 296 to 382 (EEKKDKKGVK…KKKANMHKKE (87 aa)) are disordered. Low complexity-rich tracts occupy residues 313–330 (PAAD…ANAS) and 337–356 (QDGS…GAAA). A helical transmembrane segment spans residues 391–410 (TKLAVQIGKAGLVMSAITVI). Residues 411 to 443 (ILVLYFTVDTFVVNKKPWLTECTPVYVQYFVKF) are Extracellular-facing. Residues 444-461 (FIIGVTVLVVAVPEGLPL) traverse the membrane as a helical segment. Residues 462–875 (AVTISLAYSV…MWGRNVYDSI (414 aa)) are Cytoplasmic-facing. Asp499 serves as the catalytic 4-aspartylphosphate intermediate. 2 residues coordinate Mg(2+): Asp820 and Asp824. Residues 876–895 (SKFLQFQLTVNVVAVIVAFT) form a helical membrane-spanning segment. Topologically, residues 896-905 (GACITQDSPL) are extracellular. The helical transmembrane segment at 906–926 (KAVQMLWVNLIMDTFASLALA) threads the bilayer. Residues 927–946 (TEPPTETLLLRKPYGRNKPL) are Cytoplasmic-facing. The helical transmembrane segment at 947–969 (ISRTMMKNILGHAVYQLTLIFTL) threads the bilayer. Topologically, residues 970–987 (LFVGEKMFQIDSGRNAPL) are extracellular. A helical transmembrane segment spans residues 988 to 1009 (HSPPSEHYTIIFNTFVMMQLFN). Residues 1010 to 1028 (EINARKIHGERNVFDGIFR) are Cytoplasmic-facing. A helical membrane pass occupies residues 1029–1050 (NPIFCTIVLGTFAIQIVIVQFG). The Extracellular portion of the chain corresponds to 1051–1060 (GKPFSCSPLQ). The helical transmembrane segment at 1061–1082 (LDQWMWCIFIGLGELVWGQVIA) threads the bilayer. At 1083 to 1243 (TIPTSRLKFL…SPIHSLETSL (161 aa)) the chain is on the cytoplasmic side. Phosphoserine occurs at positions 1107, 1116, 1117, 1121, 1130, 1131, and 1138. Positions 1123–1140 (LRRGQILWFRGLNRIQTQ) are calmodulin-binding subdomain A. A Phosphothreonine; by PKC modification is found at Thr1139. Residues 1141–1150 (IRVVKAFRSS) are calmodulin-binding subdomain B. 8 positions are modified to phosphoserine: Val1144, Phe1147, Arg1148, Tyr1152, Arg1161, Thr1162, Ile1175, and Ser1178. The residue at position 1188 (Thr1188) is a Phosphothreonine. The tract at residues 1194 to 1243 (AALKQNSSPPSSLNKNNSAIDSGINLTTDTSKSATSSSPGSPIHSLETSL) is disordered. Composition is skewed to low complexity over residues 1196–1211 (LKQN…KNNS) and 1220–1234 (TTDT…SPGS). At Ser1201 the chain carries Phosphoserine; by PKA. The residue at position 1211 (Ser1211) is a Phosphoserine.

The protein belongs to the cation transport ATPase (P-type) (TC 3.A.3) family. Type IIB subfamily. Interacts with PDZD11. Isoforms containing segment B are found in brain, uterus, liver and kidney and in low levels in other tissues. Isoforms containing segment W are found in kidney, uterus, and pancreas. Isoforms containing segment Y are found in pancreas and in low levels in brain and heart. Isoforms containing segment Z are found in brain and heart and isoforms containing segment X are found in low levels in brain. Isoforms containing segment A are found in low levels in heart and small intestine while isoforms containing segment C are found in testis and in low levels in other tissues.

It localises to the cell membrane. The protein resides in the synapse. It is found in the apical cell membrane. The protein localises to the basolateral cell membrane. The catalysed reaction is Ca(2+)(in) + ATP + H2O = Ca(2+)(out) + ADP + phosphate + H(+). Functionally, ATP-driven Ca(2+) ion pump involved in the maintenance of basal intracellular Ca(2+) levels in specialized cells of cerebellar circuit and vestibular and cochlear systems. Uses ATP as an energy source to transport cytosolic Ca(2+) ions across the plasma membrane to the extracellular compartment. Has fast activation and Ca(2+) clearance rate suited to control fast neuronal Ca(2+) dynamics. At parallel fiber to Purkinje neuron synapse, mediates presynaptic Ca(2+) efflux in response to climbing fiber-induced Ca(2+) rise. Provides for fast return of Ca(2+) concentrations back to their resting levels, ultimately contributing to long-term depression induction and motor learning. Plays an essential role in hearing and balance. In cochlear hair cells, shuttles Ca(2+) ions from stereocilia to the endolymph and dissipates Ca(2+) transients generated by the opening of the mechanoelectrical transduction channels. Regulates Ca(2+) levels in the vestibular system, where it contributes to the formation of otoconia. In non-excitable cells, regulates Ca(2+) signaling through spatial control of Ca(2+) ions extrusion and dissipation of Ca(2+) transients generated by store-operated channels. In lactating mammary gland, allows for the high content of Ca(2+) ions in the milk. The sequence is that of Plasma membrane calcium-transporting ATPase 2 (Atp2b2) from Rattus norvegicus (Rat).